Reading from the N-terminus, the 89-residue chain is Cell division protein ZapA (89 aa).

Belongs to the ZapA family. Type 2 subfamily. As to quaternary structure, homodimer. Interacts with FtsZ.

The protein localises to the cytoplasm. Activator of cell division through the inhibition of FtsZ GTPase activity, therefore promoting FtsZ assembly into bundles of protofilaments necessary for the formation of the division Z ring. It is recruited early at mid-cell but it is not essential for cell division. In Bacillus thuringiensis (strain Al Hakam), this protein is Cell division protein ZapA.